We begin with the raw amino-acid sequence, 436 residues long: 3-ketoacyl-CoA thiolase (436 aa).

The Acyl-thioester intermediate role is filled by C99. Residues H392 and C422 each act as proton acceptor in the active site.

Belongs to the thiolase-like superfamily. Thiolase family. Heterotetramer of two alpha chains (FadJ) and two beta chains (FadI).

Its subcellular location is the cytoplasm. The catalysed reaction is an acyl-CoA + acetyl-CoA = a 3-oxoacyl-CoA + CoA. It functions in the pathway lipid metabolism; fatty acid beta-oxidation. Catalyzes the final step of fatty acid oxidation in which acetyl-CoA is released and the CoA ester of a fatty acid two carbons shorter is formed. The polypeptide is 3-ketoacyl-CoA thiolase (Shigella flexneri).